A 189-amino-acid polypeptide reads, in one-letter code: Early E3 20.5 kDa glycoprotein (189 aa).

2 N-linked (GlcNAc...) asparagine; by host glycosylation sites follow: Asn-73 and Asn-137.

The protein belongs to the adenoviridae E3_20 family.

Functionally, E3 proteins seem to be dispensable for virus growth in tissue culture cells. They are potentially important for virus growth under special conditions; E3 region may help adenoviruses to evade the immune surveillance of the host. This is Early E3 20.5 kDa glycoprotein from Human adenovirus B serotype 3 (HAdV-3).